The chain runs to 303 residues: GTPase Era (303 aa).

One can recognise an Era-type G domain in the interval K7 to E174. The G1 stretch occupies residues G15 to S22. G15–S22 lines the GTP pocket. Residues Q41–N45 are G2. Residues D62–G65 form a G3 region. GTP is bound by residues D62–I66 and N124–D127. Residues N124–D127 are G4. The interval I153 to A155 is G5. A KH type-2 domain is found at T205 to N283.

The protein belongs to the TRAFAC class TrmE-Era-EngA-EngB-Septin-like GTPase superfamily. Era GTPase family. Monomer.

It localises to the cytoplasm. The protein resides in the cell membrane. Its function is as follows. An essential GTPase that binds both GDP and GTP, with rapid nucleotide exchange. Plays a role in 16S rRNA processing and 30S ribosomal subunit biogenesis and possibly also in cell cycle regulation and energy metabolism. This is GTPase Era from Lactococcus lactis subsp. lactis (strain IL1403) (Streptococcus lactis).